A 290-amino-acid polypeptide reads, in one-letter code: ATP synthase gamma chain (290 aa).

This sequence belongs to the ATPase gamma chain family. In terms of assembly, F-type ATPases have 2 components, CF(1) - the catalytic core - and CF(0) - the membrane proton channel. CF(1) has five subunits: alpha(3), beta(3), gamma(1), delta(1), epsilon(1). CF(0) has three main subunits: a, b and c.

It is found in the cell inner membrane. Functionally, produces ATP from ADP in the presence of a proton gradient across the membrane. The gamma chain is believed to be important in regulating ATPase activity and the flow of protons through the CF(0) complex. In Amoebophilus asiaticus (strain 5a2), this protein is ATP synthase gamma chain.